We begin with the raw amino-acid sequence, 706 residues long: Protein MAM3 (706 aa).

Residues 1 to 16 (MSFLPLRSRSRSGAPH) lie on the Vacuolar side of the membrane. Residues 17 to 37 (WVYIILYHIFTIPKIYSLPLL) form a helical membrane-spanning segment. Residues 38–65 (SGSHVLNSRDVADSGHSVGDEASVTTYY) lie on the Cytoplasmic side of the membrane. In terms of domain architecture, CNNM transmembrane spans 57–240 (DEASVTTYYI…MGVERLTKDE (184 aa)). Residues 66-86 (IISIILVLLGGVFAGLTLGLM) form a helical membrane-spanning segment. Topologically, residues 87-120 (GQDEVYLKVISTSGSNSEKKLAKRVLDLISRGKH) are vacuolar. A helical transmembrane segment spans residues 121–141 (WVLVTLLLSNVITNETLPIVL). Topologically, residues 142–145 (DRCL) are cytoplasmic. Residues 146–166 (GGGWQAVVSSTILIVIFGEII) form a helical membrane-spanning segment. Over 167–177 (PQSVCVKYGLQ) the chain is Vacuolar. Residues 178–198 (VGAFFCPFVLVLMYLMYPVAY) traverse the membrane as a helical segment. Over 199-706 (PIATLLDYML…ANGSSSTIKR (508 aa)) the chain is Cytoplasmic. 2 consecutive CBS domains span residues 259–320 (MTPI…DCLP) and 321–386 (ISHF…IVDE). Disordered regions lie at residues 421 to 495 (SHKE…ASNP), 515 to 540 (ITTH…LSAE), and 557 to 597 (LHTQ…ENQN). A compositionally biased stretch (low complexity) spans 433 to 445 (ESSPLLSPSNSNH). Phosphoserine is present on residues Ser439 and Ser447. A compositionally biased stretch (polar residues) spans 472–495 (AVLSPTPQVTEHGTIIPSNLASNP). Ser527 carries the post-translational modification Phosphoserine. A compositionally biased stretch (low complexity) spans 566-575 (TQVTTSTKTT). The span at 576–597 (RNSPDSISIPNSGANHGNENQN) shows a compositional bias: polar residues. Ser603 is subject to Phosphoserine. Tyr604 is subject to Phosphotyrosine. The residue at position 607 (Thr607) is a Phosphothreonine. Ser614 bears the Phosphoserine mark. Positions 626 to 706 (IGPAKDWDES…ANGSSSTIKR (81 aa)) are disordered. The span at 630–639 (KDWDESKSEY) shows a compositional bias: basic and acidic residues. Residues 658–680 (SSSNASLFSSIKNKFKNENANNN) are compositionally biased toward low complexity. The segment covering 681–706 (DRSNFTDSLSRTSNYDANGSSSTIKR) has biased composition (polar residues).

The protein belongs to the ACDP family.

It localises to the vacuole membrane. Its function is as follows. Involved in metal homeostasis and more specially in manganese sensitivity. The protein is Protein MAM3 (MAM3) of Saccharomyces cerevisiae (strain ATCC 204508 / S288c) (Baker's yeast).